Consider the following 300-residue polypeptide: MDPQYARLVKAAALSATVLASILLIIKIFAWWHTGSVSLLAALVDSLVDLAASLTNLFVVRYSLQPADEEHTFGHGKAESLAALAQSMFISGSALFLFLTGFQHLASPEPLQDPGLGIWVTLIALFSTLILVTFQRWVVRKTQSQAIRADMLHYQSDVMMNGAILIALALSWYGFHRADALFALGIGAYILYSALRMGYEAVQALLDRALPDDERQEIINIVTSWPGVIGAHDLRTRQSGPTRFIQLHLEMEDMLPLMEAHILADQVERALLHRFPGADILIHQDPTAVVPKERHAHWEL.

4 consecutive transmembrane segments (helical) span residues 12-32 (AALSATVLASILLIIKIFAWW), 40-60 (LAALVDSLVDLAASLTNLFVV), 82-102 (AALAQSMFISGSALFLFLTGF), and 114-134 (PGLGIWVTLIALFSTLILVTF). Asp-45 and Asp-49 together coordinate Zn(2+). Zn(2+) contacts are provided by His-153 and Asp-157. The chain crosses the membrane as a helical span at residues 164 to 184 (ILIALALSWYGFHRADALFAL).

It belongs to the cation diffusion facilitator (CDF) transporter (TC 2.A.4) family. FieF subfamily. Homodimer.

It is found in the cell inner membrane. The enzyme catalyses Zn(2+)(in) + H(+)(out) = Zn(2+)(out) + H(+)(in). It catalyses the reaction Cd(2+)(in) + H(+)(out) = Cd(2+)(out) + H(+)(in). It carries out the reaction Fe(2+)(in) + H(+)(out) = Fe(2+)(out) + H(+)(in). Its function is as follows. Divalent metal cation transporter which exports Zn(2+), Cd(2+) and possibly Fe(2+). May be involved in zinc and iron detoxification by efflux. The protein is Cation-efflux pump FieF of Yersinia enterocolitica serotype O:8 / biotype 1B (strain NCTC 13174 / 8081).